The chain runs to 210 residues: Nucleoside triphosphate pyrophosphatase (210 aa).

Asp-80 serves as the catalytic Proton acceptor.

It belongs to the Maf family. It depends on a divalent metal cation as a cofactor.

The protein resides in the cytoplasm. The catalysed reaction is a ribonucleoside 5'-triphosphate + H2O = a ribonucleoside 5'-phosphate + diphosphate + H(+). It carries out the reaction a 2'-deoxyribonucleoside 5'-triphosphate + H2O = a 2'-deoxyribonucleoside 5'-phosphate + diphosphate + H(+). Its function is as follows. Nucleoside triphosphate pyrophosphatase. May have a dual role in cell division arrest and in preventing the incorporation of modified nucleotides into cellular nucleic acids. The polypeptide is Nucleoside triphosphate pyrophosphatase (Mycobacterium sp. (strain JLS)).